Consider the following 1052-residue polypeptide: ATP-dependent DNA helicase MPH1 (1052 aa).

Residues 89–256 (IVRKGLLQNI…EVVNNLNISK (168 aa)) form the Helicase ATP-binding domain. 102–109 (IPTGMGKT) contributes to the ATP binding site. The DEAH box motif lies at 204–207 (DEAH). Positions 432–649 (ELTQFFYENP…HLVQYRKSDR (218 aa)) constitute a Helicase C-terminal domain. Disordered stretches follow at residues 495 to 550 (HGPK…NQKQ), 798 to 832 (IGDT…DLPL), 869 to 898 (SKRQ…QPEV), and 1002 to 1052 (HTVS…DSDF). Residues 503–532 (SDREKRLEEERRMDEEKKQAALQEKLERTS) are compositionally biased toward basic and acidic residues. Positions 534–549 (RTGSSEEAQLSGMNQK) are enriched in polar residues. Composition is skewed to low complexity over residues 875–898 (QPEV…QPEV) and 1005–1028 (SQSQ…QQAS). Positions 1029–1040 (QKDRSSQDKDLT) are enriched in basic and acidic residues. Residues 1043-1052 (ELEDLLDSDF) show a composition bias toward acidic residues.

This sequence belongs to the DEAD box helicase family. DEAH subfamily. FANCM sub-subfamily. Interacts with the MHF histone-fold complex to form the FANCM-MHF complex.

The protein resides in the nucleus. It catalyses the reaction ATP + H2O = ADP + phosphate + H(+). ATP-dependent DNA helicase involved in DNA damage repair by homologous recombination and in genome maintenance. Capable of unwinding D-loops. Plays a role in limiting crossover recombinants during mitotic DNA double-strand break (DSB) repair. Component of a FANCM-MHF complex which promotes gene conversion at blocked replication forks, probably by reversal of the stalled fork. This chain is ATP-dependent DNA helicase MPH1, found in Candida glabrata (strain ATCC 2001 / BCRC 20586 / JCM 3761 / NBRC 0622 / NRRL Y-65 / CBS 138) (Yeast).